A 122-amino-acid chain; its full sequence is Acidic phospholipase A2 Tpu-E6c (122 aa).

7 disulfide bridges follow: C26–C115, C28–C44, C43–C95, C49–C122, C50–C88, C57–C81, and C75–C86. Positions 27, 29, and 31 each coordinate Ca(2+). H47 is a catalytic residue. D48 is a Ca(2+) binding site. Residue D89 is part of the active site.

In terms of assembly, monomer. It depends on Ca(2+) as a cofactor. As to expression, expressed by the venom gland.

Its subcellular location is the secreted. It catalyses the reaction a 1,2-diacyl-sn-glycero-3-phosphocholine + H2O = a 1-acyl-sn-glycero-3-phosphocholine + a fatty acid + H(+). Functionally, snake venom phospholipase A2 (PLA2) that impairs hemostasis. It weakly inhibits ADP-induced platelet aggregation when tested on platelet rich plasma from human and rabbit blood (15-25% of inhibition at 5-10 ug of enzyme), and dose-dependently inhibits blood coagulation, possibly by inhibiting thrombin activation. Exhibits high hydrolytic activities toward L-dipalmitoyl phosphatidylcholine. PLA2 catalyzes the calcium-dependent hydrolysis of the 2-acyl groups in 3-sn-phosphoglycerides. This chain is Acidic phospholipase A2 Tpu-E6c, found in Craspedocephalus puniceus (Flat-nosed pitviper).